A 253-amino-acid polypeptide reads, in one-letter code: Imidazole glycerol phosphate synthase subunit HisF (253 aa).

Residues Asp11 and Asp130 contribute to the active site.

The protein belongs to the HisA/HisF family. Heterodimer of HisH and HisF.

It localises to the cytoplasm. It catalyses the reaction 5-[(5-phospho-1-deoxy-D-ribulos-1-ylimino)methylamino]-1-(5-phospho-beta-D-ribosyl)imidazole-4-carboxamide + L-glutamine = D-erythro-1-(imidazol-4-yl)glycerol 3-phosphate + 5-amino-1-(5-phospho-beta-D-ribosyl)imidazole-4-carboxamide + L-glutamate + H(+). Its pathway is amino-acid biosynthesis; L-histidine biosynthesis; L-histidine from 5-phospho-alpha-D-ribose 1-diphosphate: step 5/9. Functionally, IGPS catalyzes the conversion of PRFAR and glutamine to IGP, AICAR and glutamate. The HisF subunit catalyzes the cyclization activity that produces IGP and AICAR from PRFAR using the ammonia provided by the HisH subunit. This is Imidazole glycerol phosphate synthase subunit HisF from Acetivibrio thermocellus (strain ATCC 27405 / DSM 1237 / JCM 9322 / NBRC 103400 / NCIMB 10682 / NRRL B-4536 / VPI 7372) (Clostridium thermocellum).